The sequence spans 263 residues: Nicotinamide riboside transporter PnuC (263 aa).

The Cytoplasmic segment spans residues 1–40 (MQYGMDSFGLRGIPHQVFIKKKEGKIMSLAWWKRELFGGW). A helical membrane pass occupies residues 41–61 (THFEAVWLLMFLGIQAVVFVF). Asn62 is a topological domain (periplasmic). A helical transmembrane segment spans residues 63 to 83 (PDSWLASVAAVTGILCVVFVG). The Cytoplasmic segment spans residues 84-86 (KGK). The helical transmembrane segment at 87 to 107 (ISNYLFGLISVSLYAYVSYTF) threads the bilayer. At 108 to 109 (KL) the chain is on the periplasmic side. The helical transmembrane segment at 110–131 (YGEMMLNLLVYVPVQFVGFAMW) threads the bilayer. Gln124 is a binding site for beta-nicotinamide D-riboside. Topologically, residues 132–155 (RKHMALGETAETEEVKAKALTVRQ) are cytoplasmic. A helical transmembrane segment spans residues 156–177 (WLLVVAASVVGTSVYIEWLHHL). Residues 178 to 180 (GSA) lie on the Periplasmic side of the membrane. A helical transmembrane segment spans residues 181–201 (LPTLDGVTVVVSIVAQVLMIL). Residue Gln196 coordinates beta-nicotinamide D-riboside. Topologically, residues 202 to 205 (RYRE) are cytoplasmic. The helical transmembrane segment at 206–226 (QWALWIVVNILTISLWAVAWF) threads the bilayer. 2 residues coordinate beta-nicotinamide D-riboside: Trp210 and Asn214. The Periplasmic segment spans residues 227–232 (KNGETS). A helical transmembrane segment spans residues 233–253 (LPLLLMYVMYLCNSVYGYINW). Tyr242 contributes to the beta-nicotinamide D-riboside binding site. Residues 254–263 (TKLVKRHSGQ) lie on the Cytoplasmic side of the membrane.

This sequence belongs to the nicotinamide ribonucleoside (NR) uptake permease (TC 4.B.1) family. As to quaternary structure, homotrimer.

It is found in the cell inner membrane. In terms of biological role, required for nicotinamide riboside transport across the inner membrane. The sequence is that of Nicotinamide riboside transporter PnuC from Neisseria mucosa (strain ATCC 25996 / DSM 4631 / NCTC 10774 / M26).